A 406-amino-acid chain; its full sequence is S-adenosylmethionine synthase (406 aa).

An ATP-binding site is contributed by H17. D19 is a binding site for Mg(2+). E45 contributes to the K(+) binding site. L-methionine is bound by residues E58 and Q101. A flexible loop region spans residues 101–111; the sequence is QSAEINQGVAR. ATP-binding positions include 178 to 180, D258, 264 to 265, A281, and K285; these read DGK and RK. D258 provides a ligand contact to L-methionine. K289 contacts L-methionine.

The protein belongs to the AdoMet synthase family. As to quaternary structure, homotetramer; dimer of dimers. Requires Mg(2+) as cofactor. The cofactor is K(+).

The protein localises to the cytoplasm. The catalysed reaction is L-methionine + ATP + H2O = S-adenosyl-L-methionine + phosphate + diphosphate. Its pathway is amino-acid biosynthesis; S-adenosyl-L-methionine biosynthesis; S-adenosyl-L-methionine from L-methionine: step 1/1. In terms of biological role, catalyzes the formation of S-adenosylmethionine (AdoMet) from methionine and ATP. The overall synthetic reaction is composed of two sequential steps, AdoMet formation and the subsequent tripolyphosphate hydrolysis which occurs prior to release of AdoMet from the enzyme. The protein is S-adenosylmethionine synthase of Bifidobacterium longum subsp. infantis (strain ATCC 15697 / DSM 20088 / JCM 1222 / NCTC 11817 / S12).